We begin with the raw amino-acid sequence, 170 residues long: Flavodoxin (170 aa).

The region spanning 4-165 (IGLFYGTQTG…RVKTWVSEIK (162 aa)) is the Flavodoxin-like domain.

The protein belongs to the flavodoxin family. The cofactor is FMN.

Its function is as follows. Low-potential electron donor to a number of redox enzymes. This Synechocystis sp. (strain ATCC 27184 / PCC 6803 / Kazusa) protein is Flavodoxin (isiB).